Here is an 839-residue protein sequence, read N- to C-terminus: Taste receptor type 1 member 2 (839 aa).

The signal sequence occupies residues 1–19 (MGTRATTICSLFFLLWVLA). The Extracellular portion of the chain corresponds to 20-566 (EPAENSDFYL…VFLEWHEAPT (547 aa)). N-linked (GlcNAc...) asparagine glycosylation is found at N84, N248, N292, N312, N368, N407, N428, N487, and N527. The chain crosses the membrane as a helical span at residues 567-587 (IAVALLAALGFLSTLAILVIF). At 588–602 (WRHFQTPIVRSAGGP) the chain is on the cytoplasmic side. Residues 603–623 (MCFLMLTLLLVAYMVVPVYVG) form a helical membrane-spanning segment. Topologically, residues 624–635 (PPKVSTCLCRQA) are extracellular. A helical membrane pass occupies residues 636 to 656 (LFPLCFTICISCIAVRSFQIV). Topologically, residues 657-681 (CAFKMASRFPRAYSYWVRYQGPYVS) are cytoplasmic. The helical transmembrane segment at 682-702 (MAFITVLKMVIVVIGMLATGL) threads the bilayer. Residues 703-727 (SPTTRTDPDDPKITIVSCNPNYRNS) lie on the Extracellular side of the membrane. A helical transmembrane segment spans residues 728 to 748 (LLFNTSLDLLLSVVGFSFAYM). At 749–760 (GKELPTNYNEAK) the chain is on the cytoplasmic side. Residues 761 to 781 (FITLSMTFYFTSSVSLCTFMS) form a helical membrane-spanning segment. The Extracellular segment spans residues 782–784 (AYS). The helical transmembrane segment at 785–805 (GVLVTIVDLLVTVLNLLAISL) threads the bilayer. Over 806 to 839 (GYFGPKCYMILFYPERNTPAYFNSMIQGYTMRRD) the chain is Cytoplasmic.

This sequence belongs to the G-protein coupled receptor 3 family. TAS1R subfamily. In terms of assembly, forms heterodimers with TAS1R3.

Its subcellular location is the cell membrane. Its function is as follows. Putative taste receptor. TAS1R2/TAS1R3 recognizes diverse natural and synthetic sweeteners. The protein is Taste receptor type 1 member 2 (TAS1R2) of Gorilla gorilla gorilla (Western lowland gorilla).